The primary structure comprises 557 residues: T-complex protein 1 subunit eta (557 aa).

At A2 the chain carries N-acetylalanine. Positions 529 to 557 (PKSESAQGDAAGAMGRGRGGGRGRGMRRR) are disordered. The span at 547-557 (GGGRGRGMRRR) shows a compositional bias: basic residues.

It belongs to the TCP-1 chaperonin family. In terms of assembly, heterooligomeric complex of about 850 to 900 kDa that forms two stacked rings, 12 to 16 nm in diameter. Interacts with KNAT1.

It is found in the cytoplasm. Its function is as follows. Molecular chaperone; assists the folding of proteins upon ATP hydrolysis. Known to play a role, in vitro, in the folding of actin and tubulin. This chain is T-complex protein 1 subunit eta, found in Arabidopsis thaliana (Mouse-ear cress).